A 338-amino-acid chain; its full sequence is UPF0104 membrane protein MTH_1261 (338 aa).

Helical transmembrane passes span 6-26, 36-56, 124-144, 149-169, 231-251, 254-274, 275-295, and 310-330; these read AILI…IGPG, DPVY…LFTL, LDTF…VLYF, WILA…FLAL, ISFL…TAFG, ISLL…MIPL, LPGG…YAGV, and ISFW…GSSV.

The protein belongs to the UPF0104 family.

The protein resides in the cell membrane. In Methanothermobacter thermautotrophicus (strain ATCC 29096 / DSM 1053 / JCM 10044 / NBRC 100330 / Delta H) (Methanobacterium thermoautotrophicum), this protein is UPF0104 membrane protein MTH_1261.